A 23-amino-acid polypeptide reads, in one-letter code: Phospholipase A1 verutoxin-1 (23 aa).

It belongs to the AB hydrolase superfamily. Lipase family. In terms of processing, contains six disulfide bonds. Expressed by the venom gland.

It localises to the secreted. The catalysed reaction is a 1,2-diacyl-sn-glycero-3-phosphocholine + H2O = a 2-acyl-sn-glycero-3-phosphocholine + a fatty acid + H(+). The enzyme catalyses 1-(9Z-octadecenoyl)-2-hexadecanoyl-sn-glycero-3-phosphocholine + H2O = 2-hexadecanoyl-sn-glycero-3-phosphocholine + (9Z)-octadecenoate + H(+). It carries out the reaction a 1-acyl-sn-glycero-3-phosphocholine + H2O = sn-glycerol 3-phosphocholine + a fatty acid + H(+). It participates in phospholipid metabolism. Its activity is regulated as follows. Activity is maximal in the presence of calcium. However, unlike phospholipases A2 whose catalytic activity is strictly calcium-dependent, this enzyme shows considerable catalytic activity on phosphatidylcholine emulsified in calcium free solution; the catalytic activity of VT-1 assayed in the absence of calcium ions is 18-20% of that assayed in solution containing calcium ions. Functionally, catalyzes the hydrolysis of glycerophospholipids such as phosphatidylcholine (1,2-diacyl-sn-glycero-3-phosphocholine) and has a moderate activity to hydrolyze lysoglycerophospholipids such as lysophosphatidylcholine (1-acyl-sn-glycero-3-phosphocholine), but is unable to hydrolyze sphingomyelin. Liberates the fatty acid from the sn-1 position of 1,2-diacyl-sn-glycero-3-phosphocholine mainly, indicating phospholipase activity of the A1 type. In addition to acting as an allergen, it possesses a moderate hemolytic activity on red blood cells of mice (3% of hemolysis at 3.0 ug/ml). The protein is Phospholipase A1 verutoxin-1 of Vespa velutina (Asian yellow-legged hornet).